Consider the following 135-residue polypeptide: Basic phospholipase A2 KBf-VA (135 aa).

Intrachain disulfides connect C28/C87, C42/C134, C44/C60, C59/C115, C66/C108, C76/C101, and C94/C106. Ca(2+) contacts are provided by Y43, G45, and G47. The active site involves H63. Residue D64 participates in Ca(2+) binding. Residue D109 is part of the active site.

This sequence belongs to the phospholipase A2 family. Group I subfamily. D49 sub-subfamily. The cofactor is Ca(2+). In terms of tissue distribution, expressed by the venom gland.

Its subcellular location is the secreted. The catalysed reaction is a 1,2-diacyl-sn-glycero-3-phosphocholine + H2O = a 1-acyl-sn-glycero-3-phosphocholine + a fatty acid + H(+). Functionally, snake venom phospholipase A2 (PLA2) that inhibits neuromuscular transmission by blocking acetylcholine release from the nerve termini. PLA2 catalyzes the calcium-dependent hydrolysis of the 2-acyl groups in 3-sn-phosphoglycerides. The sequence is that of Basic phospholipase A2 KBf-VA from Bungarus fasciatus (Banded krait).